The chain runs to 308 residues: Sulfoquinovosyl glycerol transport system permease protein SmoG (308 aa).

6 helical membrane-spanning segments follow: residues 28–48 (LAVL…VYPV), 92–112 (VLIT…LALL), 126–146 (SLLI…AWFF), 164–184 (GIIW…TIIW), 223–243 (ITLP…TITA), and 279–299 (LGYG…VTAV). The ABC transmembrane type-1 domain occupies 88 to 300 (TWNTVLITLI…ALSMCVTAVY (213 aa)).

This sequence belongs to the binding-protein-dependent transport system permease family. As to quaternary structure, the complex is probably composed of two ATP-binding proteins (SmoE), two transmembrane proteins (SmoG and SmoH) and a solute-binding protein (SmoF).

The protein resides in the cell inner membrane. Part of the ABC transporter complex SmoEFGH involved in sulfoquinovosyl glycerol (SQGro) uptake. Responsible for the translocation of the substrate across the membrane. The protein is Sulfoquinovosyl glycerol transport system permease protein SmoG of Agrobacterium fabrum (strain C58 / ATCC 33970) (Agrobacterium tumefaciens (strain C58)).